Here is a 403-residue protein sequence, read N- to C-terminus: Phosphopentomutase (403 aa).

Mn(2+)-binding residues include D13, D298, H303, D339, H340, and H351.

This sequence belongs to the phosphopentomutase family. Requires Mn(2+) as cofactor.

Its subcellular location is the cytoplasm. The enzyme catalyses 2-deoxy-alpha-D-ribose 1-phosphate = 2-deoxy-D-ribose 5-phosphate. It catalyses the reaction alpha-D-ribose 1-phosphate = D-ribose 5-phosphate. It functions in the pathway carbohydrate degradation; 2-deoxy-D-ribose 1-phosphate degradation; D-glyceraldehyde 3-phosphate and acetaldehyde from 2-deoxy-alpha-D-ribose 1-phosphate: step 1/2. Isomerase that catalyzes the conversion of deoxy-ribose 1-phosphate (dRib-1-P) and ribose 1-phosphate (Rib-1-P) to deoxy-ribose 5-phosphate (dRib-5-P) and ribose 5-phosphate (Rib-5-P), respectively. The sequence is that of Phosphopentomutase from Streptococcus equi subsp. zooepidemicus (strain MGCS10565).